Reading from the N-terminus, the 767-residue chain is MTISPPESGEKNKKVLEDPVKADPRPIDFAKLDKPGFWSTKLSKGPKTTTWIWNLHADAHDFDVHTGDAEEATRKIFSAHFGHLAVIFIWMSAAFFHGARFSNYSGWLADPTHVKPGAQQVWAIVGQEMLNADLGANYNGIQISSGIFHMWRAWGITNESELMALAIGAVVMAALMLHAGIFHYHKAAPKMEWFQDIESMLNHHIAGLVGLGSLAWAGHCIHIGAPTAALLDAIDAGSPLVINGKEIATIADMPMPHQLCDPQIIGQIFPGLASGTGNFFSLNWLAFSDFLTFKGGLNPVTGSLWMTDVSHHHLAFGVIAIIGGHMYRTNYGIGHSMKEILDSQQGDPILFPAPKGHQGLFEFMAESRHAQLAVNLAMLGSISILVSHHMYAMPPYPYIATDYMTVLGLFTHHMWIGGLFIVGAGAHAGIAMVRDYDPAKHIDNVLDRILKARDALISHLNWVCMWLGFHSFGLYIHNDTMRALGRPQDMFSDSAIQLQPIFAQWVQSIQASAVGTSLLAGTAEALPHKALSEVFNGSLVEVGGKVAIAPIPLGTADLMIHHIHAFQIHVTVLILLKGVLYARSSRLIPDKASLGFRFPCDGPGRGGTCQVSSWDHVFLALFWMYNCLSIVIFHFSWKMQSDVWGLTGGNFAQSSITINGWLRDFLWAQASQVLTSYGQSISMYGLMFLGAHFIWAFSLMFLFSGRGYWQELFESIVWAHNKLKVAPTIQPRALSITQGRAVGVTHFLVGGIATTWAFFHARLFGLG.

The tract at residues 1–22 (MTISPPESGEKNKKVLEDPVKA) is disordered. Residues 8-22 (SGEKNKKVLEDPVKA) are compositionally biased toward basic and acidic residues. 8 helical membrane-spanning segments follow: residues 76–99 (IFSAHFGHLAVIFIWMSAAFFHGA), 162–185 (LMALAIGAVVMAALMLHAGIFHYH), 201–225 (LNHHIAGLVGLGSLAWAGHCIHIGA), 309–327 (VSHHHLAFGVIAIIGGHMY), 368–391 (RHAQLAVNLAMLGSISILVSHHMY), 407–433 (LGLFTHHMWIGGLFIVGAGAHAGIAMV), 455–477 (ALISHLNWVCMWLGFHSFGLYIH), and 558–576 (LMIHHIHAFQIHVTVLILL). Residues Cys600 and Cys609 each coordinate [4Fe-4S] cluster. 2 helical membrane-spanning segments follow: residues 616–637 (HVFLALFWMYNCLSIVIFHFSW) and 681–703 (ISMYGLMFLGAHFIWAFSLMFLF). Residue His692 participates in divinylchlorophyll a' binding. Residues Met700 and Tyr708 each coordinate divinyl chlorophyll a. Trp709 provides a ligand contact to phylloquinone. A helical transmembrane segment spans residues 741-761 (AVGVTHFLVGGIATTWAFFHA).

This sequence belongs to the PsaA/PsaB family. In terms of assembly, the PsaA/B heterodimer binds the P700 divinyl chlorophyll special pair and subsequent electron acceptors. PSI consists of a core antenna complex that captures photons, and an electron transfer chain that converts photonic excitation into a charge separation. The cyanobacterial PSI reaction center is composed of one copy each of PsaA,B,C,D,E,F,I,J,K,L,M and X, and forms trimeric complexes. The cofactor is PSI electron transfer chain: 5 divinyl chlorophyll a, 1 divinyl chlorophyll a', 2 phylloquinones and 3 4Fe-4S clusters. PSI core antenna: 90 divinyl chlorophyll a, 22 carotenoids, 3 phospholipids and 1 galactolipid. P700 is a divinyl chlorophyll a/divinyl chlorophyll a' dimer, A0 is one or more divinyl chlorophyll a, A1 is one or both phylloquinones and FX is a shared 4Fe-4S iron-sulfur center..

It localises to the cellular thylakoid membrane. It carries out the reaction reduced [plastocyanin] + hnu + oxidized [2Fe-2S]-[ferredoxin] = oxidized [plastocyanin] + reduced [2Fe-2S]-[ferredoxin]. Its function is as follows. PsaA and PsaB bind P700, the primary electron donor of photosystem I (PSI), as well as the electron acceptors A0, A1 and FX. PSI is a plastocyanin/cytochrome c6-ferredoxin oxidoreductase, converting photonic excitation into a charge separation, which transfers an electron from the donor P700 chlorophyll pair to the spectroscopically characterized acceptors A0, A1, FX, FA and FB in turn. Oxidized P700 is reduced on the lumenal side of the thylakoid membrane by plastocyanin or cytochrome c6. The sequence is that of Photosystem I P700 chlorophyll a apoprotein A1 from Prochlorococcus marinus (strain MIT 9301).